A 109-amino-acid chain; its full sequence is Hainantoxin-XVIII-3 (109 aa).

A signal peptide spans 1-18 (MKLSIIIIATSLVIAVVA). A propeptide spanning residues 19-46 (FPSKDSKAIENDKTEQRMEIVVQETARA) is cleaved from the precursor. 4 disulfide bridges follow: Cys-47–Cys-62, Cys-55–Cys-68, Cys-59–Cys-108, and Cys-61–Cys-81.

It belongs to the neurotoxin 25 family. F7 subfamily. Expressed by the venom gland.

The protein resides in the secreted. Putative ion channel inhibitor. This is Hainantoxin-XVIII-3 from Cyriopagopus hainanus (Chinese bird spider).